The primary structure comprises 147 residues: Large ribosomal subunit protein uL15 (147 aa).

Over residues 1 to 28 (MIRRRKKVRKLRGSHTHGWGCKKKHRGG) the composition is skewed to basic residues. A disordered region spans residues 1-43 (MIRRRKKVRKLRGSHTHGWGCKKKHRGGGSKGGRGMAGTGKRN). Over residues 29 to 38 (GSKGGRGMAG) the composition is skewed to gly residues.

Belongs to the universal ribosomal protein uL15 family. Part of the 50S ribosomal subunit.

Functionally, binds to the 23S rRNA. The chain is Large ribosomal subunit protein uL15 from Pyrococcus horikoshii (strain ATCC 700860 / DSM 12428 / JCM 9974 / NBRC 100139 / OT-3).